A 462-amino-acid polypeptide reads, in one-letter code: 3-isopropylmalate dehydratase large subunit (462 aa).

Residues C337, C397, and C400 each coordinate [4Fe-4S] cluster.

It belongs to the aconitase/IPM isomerase family. LeuC type 1 subfamily. As to quaternary structure, heterodimer of LeuC and LeuD. [4Fe-4S] cluster serves as cofactor.

It carries out the reaction (2R,3S)-3-isopropylmalate = (2S)-2-isopropylmalate. Its pathway is amino-acid biosynthesis; L-leucine biosynthesis; L-leucine from 3-methyl-2-oxobutanoate: step 2/4. Functionally, catalyzes the isomerization between 2-isopropylmalate and 3-isopropylmalate, via the formation of 2-isopropylmaleate. In Listeria monocytogenes serotype 4a (strain HCC23), this protein is 3-isopropylmalate dehydratase large subunit.